The sequence spans 53 residues: ATP synthase protein 8 (53 aa).

A helical transmembrane segment spans residues 10–30 (IMVFLVSMALLWAIMTMVFFL).

This sequence belongs to the ATPase protein 8 family. F-type ATPases have 2 components, CF(1) - the catalytic core - and CF(0) - the membrane proton channel.

It is found in the mitochondrion membrane. Functionally, mitochondrial membrane ATP synthase (F(1)F(0) ATP synthase or Complex V) produces ATP from ADP in the presence of a proton gradient across the membrane which is generated by electron transport complexes of the respiratory chain. F-type ATPases consist of two structural domains, F(1) - containing the extramembraneous catalytic core and F(0) - containing the membrane proton channel, linked together by a central stalk and a peripheral stalk. During catalysis, ATP synthesis in the catalytic domain of F(1) is coupled via a rotary mechanism of the central stalk subunits to proton translocation. Part of the complex F(0) domain. Minor subunit located with subunit a in the membrane. The protein is ATP synthase protein 8 (MT-ATP8) of Artemia franciscana (Brine shrimp).